The following is a 190-amino-acid chain: Putative 3-methyladenine DNA glycosylase (190 aa).

It belongs to the DNA glycosylase MPG family.

This chain is Putative 3-methyladenine DNA glycosylase, found in Chlamydia abortus (strain DSM 27085 / S26/3) (Chlamydophila abortus).